The chain runs to 330 residues: Cobalamin biosynthesis protein CobD (330 aa).

The next 4 helical transmembrane spans lie at 60 to 80 (TLVI…PPIV), 153 to 173 (GIIA…LLGV), 227 to 247 (LGIV…WKIF), and 308 to 328 (IVLF…FVLT).

This sequence belongs to the CobD/CbiB family.

It localises to the cell membrane. It participates in cofactor biosynthesis; adenosylcobalamin biosynthesis. Functionally, converts cobyric acid to cobinamide by the addition of aminopropanol on the F carboxylic group. In Desulfotalea psychrophila (strain LSv54 / DSM 12343), this protein is Cobalamin biosynthesis protein CobD.